Reading from the N-terminus, the 30-residue chain is Cliotide T6 (30 aa).

A cross-link (cyclopeptide (Ser-Asn)) is located at residues Ser-1–Asn-30. Disulfide bonds link Cys-4/Cys-20, Cys-8/Cys-22, and Cys-13/Cys-27.

Post-translationally, contains 3 disulfide bonds. In terms of processing, this is a cyclic peptide. In terms of tissue distribution, expressed in pod but not in flower, stem, shoot, leaf, seed, root and nodule (at protein level).

Probably participates in a plant defense mechanism. This chain is Cliotide T6, found in Clitoria ternatea (Butterfly pea).